The sequence spans 448 residues: Phosphoglucosamine mutase (448 aa).

The active-site Phosphoserine intermediate is Ser101. Residues Ser101, Asp242, Asp244, and Asp246 each contribute to the Mg(2+) site. Residue Ser101 is modified to Phosphoserine.

It belongs to the phosphohexose mutase family. Mg(2+) is required as a cofactor. In terms of processing, activated by phosphorylation.

The enzyme catalyses alpha-D-glucosamine 1-phosphate = D-glucosamine 6-phosphate. In terms of biological role, catalyzes the conversion of glucosamine-6-phosphate to glucosamine-1-phosphate. The sequence is that of Phosphoglucosamine mutase from Nitrobacter winogradskyi (strain ATCC 25391 / DSM 10237 / CIP 104748 / NCIMB 11846 / Nb-255).